The sequence spans 805 residues: Leucine--tRNA ligase (805 aa).

The 'HIGH' region motif lies at 40–51; it reads PYPSGQGLHVGH. The 'KMSKS' region motif lies at 577–581; the sequence is KMSKS. Lys-580 contributes to the ATP binding site.

Belongs to the class-I aminoacyl-tRNA synthetase family.

Its subcellular location is the cytoplasm. The catalysed reaction is tRNA(Leu) + L-leucine + ATP = L-leucyl-tRNA(Leu) + AMP + diphosphate. The polypeptide is Leucine--tRNA ligase (Pediococcus pentosaceus (strain ATCC 25745 / CCUG 21536 / LMG 10740 / 183-1w)).